The chain runs to 268 residues: Phosphatidylglycerol--prolipoprotein diacylglyceryl transferase (268 aa).

Helical transmembrane passes span 14–34, 57–77, 90–110, and 117–137; these read LGPI…FAGW, LTFY…IIFY, FFLW…LIAF, and IGAN…IGLG. R140 contributes to the a 1,2-diacyl-sn-glycero-3-phospho-(1'-sn-glycerol) binding site. 3 helical membrane passes run 174–194, 200–220, and 238–258; these read QLFE…LVTI, YLVL…CEFF, and GQIL…AVFI.

Belongs to the Lgt family.

Its subcellular location is the cell inner membrane. It carries out the reaction L-cysteinyl-[prolipoprotein] + a 1,2-diacyl-sn-glycero-3-phospho-(1'-sn-glycerol) = an S-1,2-diacyl-sn-glyceryl-L-cysteinyl-[prolipoprotein] + sn-glycerol 1-phosphate + H(+). Its pathway is protein modification; lipoprotein biosynthesis (diacylglyceryl transfer). Catalyzes the transfer of the diacylglyceryl group from phosphatidylglycerol to the sulfhydryl group of the N-terminal cysteine of a prolipoprotein, the first step in the formation of mature lipoproteins. This Francisella tularensis subsp. holarctica (strain FTNF002-00 / FTA) protein is Phosphatidylglycerol--prolipoprotein diacylglyceryl transferase.